Here is an 829-residue protein sequence, read N- to C-terminus: Cap-specific mRNA (nucleoside-2'-O-)-methyltransferase 1 (829 aa).

The interval M1–A68 is disordered. Residues K2 to K16 carry the Bipartite nuclear localization signal motif. Low complexity predominate over residues Q31–L44. Residues S55–A68 show a composition bias toward polar residues. The 47-residue stretch at Y79–K125 folds into the G-patch domain. Residues K195–D199 and R210 each bind substrate. Residues F223 to K442 enclose the RrmJ-type SAM-dependent 2'-O-MTase domain. N226 is a binding site for S-adenosyl-L-methionine. Residue K231 is part of the active site. S-adenosyl-L-methionine contacts are provided by residues C269–F275 and D327–I328. Residue D356 is part of the active site. Residue N366 to Q368 coordinates substrate. The active-site Proton acceptor is K396. N431 is a substrate binding site. The 35-residue stretch at K745 to T779 folds into the WW domain.

It is found in the nucleus. The catalysed reaction is a 5'-end (N(7)-methyl 5'-triphosphoguanosine)-ribonucleoside in mRNA + S-adenosyl-L-methionine = a 5'-end (N(7)-methyl 5'-triphosphoguanosine)-(2'-O-methyl-ribonucleoside) in mRNA + S-adenosyl-L-homocysteine + H(+). In terms of biological role, S-adenosyl-L-methionine-dependent methyltransferase that mediates mRNA cap1 2'-O-ribose methylation to the 5'-cap structure of mRNAs. Methylates the ribose of the first nucleotide of a m(7)GpppG-capped mRNA and small nuclear RNA (snRNA) to produce m(7)GpppRm (cap1). Displays a preference for cap0 transcripts. Cap1 modification is linked to higher levels of translation. May be involved in the interferon response pathway. This Danio rerio (Zebrafish) protein is Cap-specific mRNA (nucleoside-2'-O-)-methyltransferase 1 (cmtr1).